A 672-amino-acid chain; its full sequence is F(420)H(2) dehydrogenase subunit L (672 aa).

Transmembrane regions (helical) follow at residues E8 to G28, I37 to L57, I79 to I99, I136 to F156, V179 to F199, I225 to V245, T265 to A285, L298 to V318, M337 to F357, I360 to V380, V394 to I414, Y447 to M467, P483 to L503, L545 to I565, F601 to I621, and T652 to L672.

The protein belongs to the complex I subunit 5 family. The FPO complex is composed of at least 13 different subunits. FpoA, FpoH, FpoJ, FpoK, FpoL, FpoM and FpoN proteins constitute the membrane sector of the complex.

It localises to the cell membrane. The enzyme catalyses methanophenazine + reduced coenzyme F420-(gamma-L-Glu)(n) = dihydromethanophenazine + oxidized coenzyme F420-(gamma-L-Glu)(n) + H(+). Component of the F(420)H(2) dehydrogenase (FPO complex) which is part of the energy-conserving F(420)H(2):heterodisulfide oxidoreductase system. The membrane-bound electron transfer system of the complex plays an important role in the metabolism of methylotrophic methanogens when the organisms grow on methanol or methylamines. Catalyzes the oxidation of methanophenazine to dihydromethanophenazine. It shuttles electrons from F(420)H(2), via FAD and iron-sulfur (Fe-S) centers, to methanophenazine (an electron carrier in the membrane). It couples the redox reaction to proton translocation (for every two electrons transferred, two hydrogen ions are translocated across the cytoplasmic membrane), and thus conserves the redox energy in a proton gradient. It also catalyzes the oxidation of F(420)H(2) with quinones such as 2,3-dimethyl-1,4-naphthoquinone, 2-methyl-1,4-naphthoquinone and tetramethyl-p-benzoquinone. The chain is F(420)H(2) dehydrogenase subunit L (fpoL) from Methanosarcina mazei (strain ATCC BAA-159 / DSM 3647 / Goe1 / Go1 / JCM 11833 / OCM 88) (Methanosarcina frisia).